A 218-amino-acid chain; its full sequence is Uracil-DNA glycosylase (218 aa).

Asp59 functions as the Proton acceptor in the catalytic mechanism.

This sequence belongs to the uracil-DNA glycosylase (UDG) superfamily. UNG family.

The protein localises to the cytoplasm. The enzyme catalyses Hydrolyzes single-stranded DNA or mismatched double-stranded DNA and polynucleotides, releasing free uracil.. Excises uracil residues from the DNA which can arise as a result of misincorporation of dUMP residues by DNA polymerase or due to deamination of cytosine. The chain is Uracil-DNA glycosylase from Staphylococcus aureus (strain JH1).